The following is a 336-amino-acid chain: Dihydroorotate dehydrogenase (quinone) (336 aa).

FMN contacts are provided by residues 62 to 66 (AGLDK) and T86. K66 contributes to the substrate binding site. 111–115 (NRMGF) provides a ligand contact to substrate. Residues N139 and N172 each coordinate FMN. Residue N172 participates in substrate binding. The active-site Nucleophile is S175. N177 is a substrate binding site. FMN-binding residues include K217 and T245. Residue 246 to 247 (NT) coordinates substrate. Residues G268, G297, and 318 to 319 (YS) each bind FMN.

It belongs to the dihydroorotate dehydrogenase family. Type 2 subfamily. As to quaternary structure, monomer. Requires FMN as cofactor.

The protein resides in the cell membrane. The catalysed reaction is (S)-dihydroorotate + a quinone = orotate + a quinol. Its pathway is pyrimidine metabolism; UMP biosynthesis via de novo pathway; orotate from (S)-dihydroorotate (quinone route): step 1/1. Its function is as follows. Catalyzes the conversion of dihydroorotate to orotate with quinone as electron acceptor. This chain is Dihydroorotate dehydrogenase (quinone), found in Aliivibrio fischeri (strain MJ11) (Vibrio fischeri).